Here is a 298-residue protein sequence, read N- to C-terminus: Heterogeneous nuclear ribonucleoprotein C (298 aa).

The residue at position 2 (alanine 2) is an N-acetylalanine. Glycyl lysine isopeptide (Lys-Gly) (interchain with G-Cter in SUMO2) cross-links involve residues lysine 8, lysine 50, lysine 89, and lysine 94. The 72-residue stretch at 16–87 (SRVFIGNLNT…QVLDINLAAE (72 aa)) folds into the RRM domain. Serine 108 carries the phosphoserine modification. 2 disordered regions span residues 131 to 177 (PPPP…VKGD) and 204 to 298 (EKEQ…EDDS). The Nuclear localization signal motif lies at 142-148 (PSKRQRV). Serine 149 and serine 153 each carry phosphoserine. Residues 162–173 (SKSGQRGSSSKS) are compositionally biased toward low complexity. Position 163 is an N6-acetyllysine; alternate (lysine 163). Residue lysine 163 forms a Glycyl lysine isopeptide (Lys-Gly) (interchain with G-Cter in SUMO2); alternate linkage. Positions 176–211 (GDDLQAIKKELTQIKQKVDSLLESLEKIEKEQSKQA) form a coiled coil. Residue lysine 209 forms a Glycyl lysine isopeptide (Lys-Gly) (interchain with G-Cter in SUMO2) linkage. Phosphoserine is present on residues serine 214, serine 216, and serine 217. A Glycyl lysine isopeptide (Lys-Gly) (interchain with G-Cter in SUMO2) cross-link involves residue lysine 222. A Glycyl lysine isopeptide (Lys-Gly) (interchain with G-Cter in SUMO2); alternate cross-link involves residue lysine 225. Lysine 225 is covalently cross-linked (Glycyl lysine isopeptide (Lys-Gly) (interchain with G-Cter in SUMO1); alternate). Serine 226, serine 231, serine 232, and serine 234 each carry phosphoserine. A compositionally biased stretch (basic and acidic residues) spans 235–246 (VKKDETNVKMES). Residues lysine 236 and lysine 237 each participate in a glycyl lysine isopeptide (Lys-Gly) (interchain with G-Cter in SUMO2) cross-link. Lysine 243 participates in a covalent cross-link: Glycyl lysine isopeptide (Lys-Gly) (interchain with G-Cter in SUMO2); alternate. Lysine 243 is covalently cross-linked (Glycyl lysine isopeptide (Lys-Gly) (interchain with G-Cter in SUMO); alternate). Phosphoserine occurs at positions 246 and 253. Positions 248–269 (AGADDSAEEGDLLDDDDNEDRG) are enriched in acidic residues. Residues 270 to 279 (DDQLELKDDE) are compositionally biased toward basic and acidic residues. Acidic residues predominate over residues 280–298 (KEPEEGEDDRDSANGEDDS). Residues serine 291 and serine 298 each carry the phosphoserine modification.

It belongs to the RRM HNRPC family. RALY subfamily. In terms of assembly, tetramer composed of 3 copies of isoform C1 and 1 copy of isoform C2. Assembly of 3 tetramers with bound pre-mRNA gives rise to a 19S complex that interacts with HNRNPA2B1 tetramers. Component of the 40S hnRNP particle. Identified in the spliceosome C complex. Interacts with IGF2BP1. Interacts with PPIA/CYPA. Post-translationally, phosphorylated on Ser-253 and Ser-291 in resting cells. In terms of processing, sumoylated. Sumoylation reduces affinity for mRNA. Ubiquitinated and degraded after nucleo-cytoplasmic transport by YWHAE.

Its subcellular location is the nucleus. Functionally, binds pre-mRNA and nucleates the assembly of 40S hnRNP particles. Interacts with poly-U tracts in the 3'-UTR or 5'-UTR of mRNA and modulates the stability and the level of translation of bound mRNA molecules. Single HNRNPC tetramers bind 230-240 nucleotides. Trimers of HNRNPC tetramers bind 700 nucleotides. May play a role in the early steps of spliceosome assembly and pre-mRNA splicing. N6-methyladenosine (m6A) has been shown to alter the local structure in mRNAs and long non-coding RNAs (lncRNAs) via a mechanism named 'm(6)A-switch', facilitating binding of HNRNPC, leading to regulation of mRNA splicing. This Rattus norvegicus (Rat) protein is Heterogeneous nuclear ribonucleoprotein C.